The primary structure comprises 209 residues: Ubiquitin-conjugating enzyme E2 S (209 aa).

Positions 14–160 (QTIRQVMREL…ARMMTEIHAQ (147 aa)) constitute a UBC core domain. The active-site Glycyl thioester intermediate is the C98. The interval 162–209 (AKCGAGAHGDDKDDDGPSTKKHAGLDKKLQDKKKEKLLKEKKRMLKRL) is disordered. The segment covering 169-199 (HGDDKDDDGPSTKKHAGLDKKLQDKKKEKLL) has biased composition (basic and acidic residues). The span at 200–209 (KEKKRMLKRL) shows a compositional bias: basic residues.

Belongs to the ubiquitin-conjugating enzyme family.

The catalysed reaction is S-ubiquitinyl-[E1 ubiquitin-activating enzyme]-L-cysteine + [E2 ubiquitin-conjugating enzyme]-L-cysteine = [E1 ubiquitin-activating enzyme]-L-cysteine + S-ubiquitinyl-[E2 ubiquitin-conjugating enzyme]-L-cysteine.. It participates in protein modification; protein ubiquitination. In terms of biological role, catalyzes the covalent attachment of ubiquitin to other proteins. Acts as an essential factor of the anaphase promoting complex/cyclosome (APC/C), a cell cycle-regulated ubiquitin ligase that controls progression through mitosis. Acts by specifically elongating polyubiquitin chains initiated by the E2 enzyme vih/UbcH10 on APC/C substrates, enhancing the degradation of APC/C substrates by the proteasome and promoting mitotic exit. This Drosophila erecta (Fruit fly) protein is Ubiquitin-conjugating enzyme E2 S.